The sequence spans 418 residues: MRVLILGSGVVGVATAYYLSREGHEVVVADRRDGPGMETSFANAGQVSPGYSSPWAAPGIPLKVLRWMTQPRSPFVLRPKLDWAQWRWMTQMLGNCTANAYARNKARMVRLAEYSRDQLRDLRDETGIAYDNRERGTLQLFRTQKQMDHTADDIAVLKSYGVAYEVLDRAGCIAAEPGLQWAQVPLVGGLRLPGDETGDAHLFTRELARICMERGVSFLFGTQIHGFSTQGDKITAIRSSRGDLMADAYVCALGSYSPLLLKQIGIAAPIYPVKGYSMTIPITDETHAPVSTVMDETYKIAITRLGNRIRVGGTAELAGYDTRLRQERRMTLEGSVKELFPDSGDLPAATFWSGLRPMTPDGTPIIGPTRYRNLHLNTGHGTLGWTMSCGSGRLLADMISGKRPNIDHADLAIARYAG.

3–17 provides a ligand contact to FAD; it reads VLILGSGVVGVATAY.

It belongs to the DadA oxidoreductase family. It depends on FAD as a cofactor.

The enzyme catalyses a D-alpha-amino acid + A + H2O = a 2-oxocarboxylate + AH2 + NH4(+). It functions in the pathway amino-acid degradation; D-alanine degradation; NH(3) and pyruvate from D-alanine: step 1/1. Oxidative deamination of D-amino acids. This is D-amino acid dehydrogenase from Granulibacter bethesdensis (strain ATCC BAA-1260 / CGDNIH1).